Consider the following 209-residue polypeptide: Glutathione S-transferase 1, isoform D (209 aa).

A GST N-terminal domain is found at 1–80 (MDFYYLPGSA…YLAEKYGKDD (80 aa)). Glutathione is bound by residues Ser-9, 50–52 (HCI), and 64–66 (ESR). Residues 86-207 (DPQKRAVVNQ…AGADEFKAKF (122 aa)) enclose the GST C-terminal domain.

It belongs to the GST superfamily. Theta family. In terms of assembly, homodimer.

It carries out the reaction RX + glutathione = an S-substituted glutathione + a halide anion + H(+). It catalyses the reaction 1,1,1-trichloro-2,2-bis(4-chlorophenyl)ethane = 1,1-dichloro-2,2-bis(4-chlorophenyl)ethylene + chloride + H(+). Inhibited by S-hexylglutathione. Functionally, conjugation of reduced glutathione to a wide number of exogenous and endogenous hydrophobic electrophiles. Has DDT dehydrochlorinase activity. The chain is Glutathione S-transferase 1, isoform D (GstD1) from Anopheles gambiae (African malaria mosquito).